The sequence spans 442 residues: Trigger factor (442 aa).

The PPIase FKBP-type domain occupies 175-258; the sequence is GDFISISLHV…VNAVIEVSIP (84 aa).

Belongs to the FKBP-type PPIase family. Tig subfamily.

The protein resides in the cytoplasm. It carries out the reaction [protein]-peptidylproline (omega=180) = [protein]-peptidylproline (omega=0). In terms of biological role, involved in protein export. Acts as a chaperone by maintaining the newly synthesized protein in an open conformation. Functions as a peptidyl-prolyl cis-trans isomerase. The sequence is that of Trigger factor (tig) from Chlamydia pneumoniae (Chlamydophila pneumoniae).